We begin with the raw amino-acid sequence, 312 residues long: Malate dehydrogenase (312 aa).

NAD(+)-binding positions include 12–17 (GAGFTG) and D36. 2 residues coordinate substrate: R87 and R93. Residues N100 and 123-125 (LTN) contribute to the NAD(+) site. N125 is a binding site for substrate. Phosphoserine is present on S149. Substrate is bound at residue R156. The active-site Proton acceptor is the H180.

Belongs to the LDH/MDH superfamily. MDH type 3 family.

It carries out the reaction (S)-malate + NAD(+) = oxaloacetate + NADH + H(+). In terms of biological role, catalyzes the reversible oxidation of malate to oxaloacetate. This Geobacillus thermodenitrificans protein is Malate dehydrogenase.